The primary structure comprises 140 residues: Heavy metal-associated isoprenylated plant protein 31 (140 aa).

The HMA domain occupies 3–67 (MTVEIRVPNL…AVRRAGKAAE (65 aa)). A metal cation is bound by residues Cys14 and Cys17. Cys137 is modified (cysteine methyl ester). Residue Cys137 is the site of S-farnesyl cysteine attachment. A propeptide spans 138–140 (TIM) (removed in mature form).

Belongs to the HIPP family.

Heavy-metal-binding protein. This chain is Heavy metal-associated isoprenylated plant protein 31, found in Arabidopsis thaliana (Mouse-ear cress).